A 677-amino-acid chain; its full sequence is DNA ligase (677 aa).

Residues 43–47 (DHVYD), 92–93 (SM), and Glu-122 contribute to the NAD(+) site. The N6-AMP-lysine intermediate role is filled by Lys-124. The NAD(+) site is built by Arg-145, Glu-179, Lys-295, and Lys-319. 4 residues coordinate Zn(2+): Cys-413, Cys-416, Cys-431, and Cys-436. A BRCT domain is found at 599 to 677 (TSDSYFNGKT…EADLDNYLAQ (79 aa)).

It belongs to the NAD-dependent DNA ligase family. LigA subfamily. Mg(2+) serves as cofactor. The cofactor is Mn(2+).

The catalysed reaction is NAD(+) + (deoxyribonucleotide)n-3'-hydroxyl + 5'-phospho-(deoxyribonucleotide)m = (deoxyribonucleotide)n+m + AMP + beta-nicotinamide D-nucleotide.. DNA ligase that catalyzes the formation of phosphodiester linkages between 5'-phosphoryl and 3'-hydroxyl groups in double-stranded DNA using NAD as a coenzyme and as the energy source for the reaction. It is essential for DNA replication and repair of damaged DNA. The sequence is that of DNA ligase from Latilactobacillus sakei subsp. sakei (strain 23K) (Lactobacillus sakei subsp. sakei).